A 2170-amino-acid chain; its full sequence is Supervillin (2170 aa).

An interaction with MYLK region spans residues 1–167; that stretch reads MKRKERIARR…NSRHSRTESG (167 aa). Disordered regions lie at residues 37–94, 107–327, 413–444, 511–546, and 567–643; these read EDTP…HSLE, RRRQ…QSES, PEPL…NKDL, DYTG…GAEA, and RASK…EDEE. The residue at position 50 (S50) is a Phosphoserine. Composition is skewed to polar residues over residues 63–73 and 81–90; these read PGSSLEKQTPS and GIHSSGSMDT. Over residues 134–166 the composition is skewed to basic and acidic residues; the sequence is SRKDPDVTERRGKSDKQEEQSKDANSRHSRTES. Over residues 167–195 the composition is skewed to polar residues; sequence GPRTSLVASQDCTPLGSNMSDQEQLLNVE. 3 positions are modified to phosphoserine: S220, S227, and S241. A compositionally biased stretch (polar residues) spans 230 to 241; that stretch reads QIPSSPLQQPAS. Composition is skewed to basic and acidic residues over residues 261 to 272 and 286 to 297; these read PTHEWFLQRDSE and KVREKLVKEESA. Residues 298 to 313 show a composition bias toward polar residues; it reads RSSPELTSESLTQRRQ. Residues S299 and S300 each carry the phosphoserine modification. Residues 427–444 show a composition bias toward basic and acidic residues; that stretch reads EDDRLVRGHKDPSGNKDL. 2 stretches are compositionally biased toward basic and acidic residues: residues 570 to 582 and 606 to 615; these read KKPE…ERSA and ESRKTSERFR. Phosphoserine is present on residues S632, S666, S728, and S761. A disordered region spans residues 743-771; the sequence is ASAHQKALARDQANEGRESAEPGEPDSST. Over residues 750-762 the composition is skewed to basic and acidic residues; it reads LARDQANEGRESA. Residue Y809 is modified to Phosphotyrosine. At T811 the chain carries Phosphothreonine. 3 positions are modified to phosphoserine: S857, S877, and S881. A disordered region spans residues 887-909; that stretch reads AWRPLVEHSGSKGMPGESGKTES. Phosphoserine occurs at positions 960, 1011, 1031, and 1077. The interval 1117 to 1137 is disordered; sequence HTQEVEQSLKKKRVTESRESQ. Residues 1119-1137 are compositionally biased toward basic and acidic residues; it reads QEVEQSLKKKRVTESRESQ. The residue at position 1159 (R1159) is an Omega-N-methylarginine. S1181 and S1184 each carry phosphoserine. The residue at position 1186 (T1186) is a Phosphothreonine. Phosphoserine occurs at positions 1190, 1278, and 1361. An interaction with NEB region spans residues 1375-1643; the sequence is SNINLRSVNL…KFLDWTELKR (269 aa). Gelsolin-like repeat units lie at residues 1397 to 1496, 1516 to 1638, 1708 to 1818, 1837 to 1938, and 1971 to 2078; these read KKLM…LGGQ, IETN…FLDW, VSVD…FQGG, WRLY…LGRR, and ATEF…FPSW. The HP domain occupies 2107 to 2170; that stretch reads KLCKTIYPLA…VNLKKSKGLF (64 aa).

The protein belongs to the villin/gelsolin family. As to quaternary structure, associates with F-actin. Interacts with NEB. Interacts with MYH9. Interacts with MYLK. Interacts with TASOR. Interacts with TRIP6. Interacts with DYNLT1. Interacts with KIF14; at midbody during cytokinesis. In terms of tissue distribution, expressed in the heart, tongue and granular cells within the cerebellum.

The protein localises to the cell membrane. It is found in the cytoplasm. It localises to the cytoskeleton. The protein resides in the cell projection. Its subcellular location is the invadopodium. The protein localises to the podosome. It is found in the midbody. It localises to the cleavage furrow. In terms of biological role, forms a high-affinity link between the actin cytoskeleton and the membrane. Is among the first costameric proteins to assemble during myogenesis and it contributes to myogenic membrane structure and differentiation. Appears to be involved in myosin II assembly. May modulate myosin II regulation through MLCK during cell spreading, an initial step in cell migration. May play a role in invadopodial function. May be involved in modulation of focal adhesions. Supervillin-mediated down-regulation of focal adhesions involves binding to TRIP6. Plays a role in cytokinesis through KIF14 interaction. The chain is Supervillin (Svil) from Mus musculus (Mouse).